Here is a 661-residue protein sequence, read N- to C-terminus: UvrABC system protein B (661 aa).

The Helicase ATP-binding domain maps to 25–182 (AGLNSKKRSQ…NDLINLQYKR (158 aa)). 38–45 (GITGSGKT) lines the ATP pocket. The Beta-hairpin motif lies at 91–114 (YYDYYQPEAYIARTDTFIEKDSSI). One can recognise a Helicase C-terminal domain in the interval 430–592 (QVEDLISEIQ…IIPKTINRAI (163 aa)). One can recognise a UVR domain in the interval 621 to 656 (KANINKLNKEMLKAASNLEFEQAAKLRDQLKTLEAA).

This sequence belongs to the UvrB family. In terms of assembly, forms a heterotetramer with UvrA during the search for lesions. Interacts with UvrC in an incision complex.

The protein resides in the cytoplasm. Its function is as follows. The UvrABC repair system catalyzes the recognition and processing of DNA lesions. A damage recognition complex composed of 2 UvrA and 2 UvrB subunits scans DNA for abnormalities. Upon binding of the UvrA(2)B(2) complex to a putative damaged site, the DNA wraps around one UvrB monomer. DNA wrap is dependent on ATP binding by UvrB and probably causes local melting of the DNA helix, facilitating insertion of UvrB beta-hairpin between the DNA strands. Then UvrB probes one DNA strand for the presence of a lesion. If a lesion is found the UvrA subunits dissociate and the UvrB-DNA preincision complex is formed. This complex is subsequently bound by UvrC and the second UvrB is released. If no lesion is found, the DNA wraps around the other UvrB subunit that will check the other stand for damage. The polypeptide is UvrABC system protein B (Rickettsia akari (strain Hartford)).